Here is a 637-residue protein sequence, read N- to C-terminus: Choline O-acetyltransferase (637 aa).

Positions 1–13 (MPVSKREQSKDTG) are enriched in basic and acidic residues. The segment at 1–20 (MPVSKREQSKDTGDPCALPK) is disordered. The active-site Proton acceptor is His-329. Residues 407–419 (GKEF…MSPD), Ser-445, and Gln-545 each bind CoA.

The protein belongs to the carnitine/choline acetyltransferase family.

It carries out the reaction choline + acetyl-CoA = acetylcholine + CoA. Functionally, catalyzes the reversible synthesis of acetylcholine (ACh) from acetyl CoA and choline at cholinergic synapses. This chain is Choline O-acetyltransferase (chat), found in Danio rerio (Zebrafish).